Reading from the N-terminus, the 154-residue chain is Putative lipoprotein MAB_4074c (154 aa).

The signal sequence occupies residues 1 to 21 (MMNRVIVGAMGLLAAGAVVVG). Residue Cys22 is the site of N-palmitoyl cysteine attachment. Cys22 is lipidated: S-diacylglycerol cysteine.

The protein belongs to the mycobacterial 19 kDa antigen family.

It localises to the cell membrane. The protein is Putative lipoprotein MAB_4074c of Mycobacteroides abscessus (strain ATCC 19977 / DSM 44196 / CCUG 20993 / CIP 104536 / JCM 13569 / NCTC 13031 / TMC 1543 / L948) (Mycobacterium abscessus).